The sequence spans 138 residues: Large ribosomal subunit protein uL16 (138 aa).

Basic residues predominate over residues 1–16; the sequence is MLIPRRVKHRKQHHPG. The segment at 1–24 is disordered; sequence MLIPRRVKHRKQHHPGRSGAATGG.

This sequence belongs to the universal ribosomal protein uL16 family. As to quaternary structure, part of the 50S ribosomal subunit.

Binds 23S rRNA and is also seen to make contacts with the A and possibly P site tRNAs. This is Large ribosomal subunit protein uL16 from Paenarthrobacter aurescens (strain TC1).